The chain runs to 954 residues: Calsyntenin-1 (954 aa).

The signal sequence occupies residues 1-25 (MRIRGVKPFASAVGLLLGLLYAVDA). The Extracellular segment spans residues 26-833 (AKVNKHKPWI…THQASVVPSA (808 aa)). Cadherin domains lie at 35–151 (IETT…SPVF) and 152–252 (KEKS…KPSW). Asparagine 333, asparagine 353, and asparagine 552 each carry an N-linked (GlcNAc...) asparagine glycan. The helical transmembrane segment at 834 to 854 (ATIVIVVCVSFLVFMIILGVF) threads the bilayer. Over 855–954 (RIRAAHQRTM…LEWDDSTLTY (100 aa)) the chain is Cytoplasmic. The tract at residues 891–954 (TYEDQHSSEE…LEWDDSTLTY (64 aa)) is disordered. The segment covering 900 to 935 (EEGDEEEEESEDGEEEDDITSAESDSSEDEAGEQED) has biased composition (acidic residues).

It belongs to the calsyntenin family. Homooligomer and heterooligomer; mediates both homophilic and heterophilc interactions with clstn2 and clstn3 paralogs via cadherin domains. In terms of tissue distribution, by 48 hours post-fertilization (hpf), widely expressed in the brain, with strong expression in the telencephalon and the midbrain.

The protein resides in the postsynaptic cell membrane. Its subcellular location is the endoplasmic reticulum membrane. It is found in the golgi apparatus membrane. The protein localises to the cell projection. It localises to the neuron projection. Functionally, postsynaptic adhesion molecule involved in vesicle trafficking; required for branching of peripheral but not central axons of sensory neurons. Promotes synapse development by acting as a cell adhesion molecule at the postsynaptic membrane, which associates with presynaptic neurexins. This is Calsyntenin-1 from Danio rerio (Zebrafish).